The chain runs to 189 residues: Protein F29A7.6 (189 aa).

The interval 124–161 is disordered; sequence KSLGGQKLAALDKKSQSKRERRQQNERNEETTGGRRFN. Positions 133–161 are enriched in basic and acidic residues; the sequence is ALDKKSQSKRERRQQNERNEETTGGRRFN.

This sequence belongs to the MPP6 family.

The polypeptide is Protein F29A7.6 (Caenorhabditis elegans).